A 339-amino-acid polypeptide reads, in one-letter code: Putative phosphate acyltransferase (339 aa).

Belongs to the PlsX family. As to quaternary structure, homodimer. Probably interacts with PlsY.

It localises to the cytoplasm. It catalyses the reaction a fatty acyl-[ACP] + phosphate = an acyl phosphate + holo-[ACP]. It participates in lipid metabolism; phospholipid metabolism. Its function is as follows. Catalyzes the reversible formation of acyl-phosphate (acyl-PO(4)) from acyl-[acyl-carrier-protein] (acyl-ACP). This enzyme utilizes acyl-ACP as fatty acyl donor, but not acyl-CoA. The protein is Putative phosphate acyltransferase of Clostridium perfringens (strain 13 / Type A).